The chain runs to 173 residues: Crossover junction endodeoxyribonuclease RuvC (173 aa).

Active-site residues include Asp-8, Glu-67, and Asp-139. Mg(2+) is bound by residues Asp-8, Glu-67, and Asp-139.

It belongs to the RuvC family. As to quaternary structure, homodimer which binds Holliday junction (HJ) DNA. The HJ becomes 2-fold symmetrical on binding to RuvC with unstacked arms; it has a different conformation from HJ DNA in complex with RuvA. In the full resolvosome a probable DNA-RuvA(4)-RuvB(12)-RuvC(2) complex forms which resolves the HJ. It depends on Mg(2+) as a cofactor.

It is found in the cytoplasm. It catalyses the reaction Endonucleolytic cleavage at a junction such as a reciprocal single-stranded crossover between two homologous DNA duplexes (Holliday junction).. Its function is as follows. The RuvA-RuvB-RuvC complex processes Holliday junction (HJ) DNA during genetic recombination and DNA repair. Endonuclease that resolves HJ intermediates. Cleaves cruciform DNA by making single-stranded nicks across the HJ at symmetrical positions within the homologous arms, yielding a 5'-phosphate and a 3'-hydroxyl group; requires a central core of homology in the junction. The consensus cleavage sequence is 5'-(A/T)TT(C/G)-3'. Cleavage occurs on the 3'-side of the TT dinucleotide at the point of strand exchange. HJ branch migration catalyzed by RuvA-RuvB allows RuvC to scan DNA until it finds its consensus sequence, where it cleaves and resolves the cruciform DNA. This Shigella flexneri serotype 5b (strain 8401) protein is Crossover junction endodeoxyribonuclease RuvC.